The sequence spans 413 residues: MLGVIADDFTGASDIASFLVENGLSTVQMNGVPTQSLNSKVDAIVISLKSRSNPVNEAIEQSLRAYQWLKENGCTQFYFKYCSTFDSTAKGNIGPVTDALLDELNEDFTVITPALPVNGRTIFNGYLFVGDVLLSESGMKNHPITPMVDANLMRLMDAQAKGKTGLVAYADVIKGASRVQECFAELKAQGYRYAVVDAVDNSQLEVLAEAVADFKLVTGGSGLGAYMAARLSGGKKGTNAFTPTKGKTVVLSGSCSVMTNKQVEKYREKAPHFQLDVEQAIHNENYIEQLYQWVIANLDSEFAPMVYATVPPDALKAIQHQFGVDQASHAIENTFAKLAAKLKQYGVTNFITAGGETSSIVVQELGFTGFHIGKQIAPGVPWLKAVEEDIFLALKSGNFGKEDFFEYAQGMFL.

ATP contacts are provided by residues Ser254, 354-357 (GGET), and Gly397.

Belongs to the four-carbon acid sugar kinase family.

It catalyses the reaction 3-dehydro-L-erythronate + ATP = 3-dehydro-4-O-phospho-L-erythronate + ADP + H(+). The catalysed reaction is 3-dehydro-D-erythronate + ATP = 3-dehydro-4-O-phospho-D-erythronate + ADP + H(+). Functionally, catalyzes the ATP-dependent phosphorylation of 3-oxo-tetronate to 3-oxo-tetronate 4-phosphate. This is 3-oxo-tetronate kinase from Haemophilus influenzae (strain ATCC 51907 / DSM 11121 / KW20 / Rd).